Reading from the N-terminus, the 337-residue chain is Movement protein (337 aa).

The span at 1 to 11 (MAGLWRSNSTL) shows a compositional bias: polar residues. 2 disordered regions span residues 1–24 (MAGL…QTET) and 273–337 (SVVR…VRQT).

The protein localises to the host cell junction. It localises to the host plasmodesma. Transports viral genome to neighboring plant cells directly through plasmosdesmata, without any budding. The movement protein allows efficient cell to cell propagation, by bypassing the host cell wall barrier. Acts by forming a tubular structure at the host plasmodesmata, enlarging it enough to allow free passage of virion capsids. The chain is Movement protein from Olive latent virus 2 (isolate Italy) (OLV-2).